Reading from the N-terminus, the 247-residue chain is 1-(5-phosphoribosyl)-5-[(5-phosphoribosylamino)methylideneamino] imidazole-4-carboxamide isomerase (247 aa).

Residue aspartate 8 is the Proton acceptor of the active site. Catalysis depends on aspartate 131, which acts as the Proton donor.

Belongs to the HisA/HisF family.

It is found in the cytoplasm. It carries out the reaction 1-(5-phospho-beta-D-ribosyl)-5-[(5-phospho-beta-D-ribosylamino)methylideneamino]imidazole-4-carboxamide = 5-[(5-phospho-1-deoxy-D-ribulos-1-ylimino)methylamino]-1-(5-phospho-beta-D-ribosyl)imidazole-4-carboxamide. It functions in the pathway amino-acid biosynthesis; L-histidine biosynthesis; L-histidine from 5-phospho-alpha-D-ribose 1-diphosphate: step 4/9. The sequence is that of 1-(5-phosphoribosyl)-5-[(5-phosphoribosylamino)methylideneamino] imidazole-4-carboxamide isomerase from Acidovorax sp. (strain JS42).